The following is a 259-amino-acid chain: Ribonuclease HII (259 aa).

An RNase H type-2 domain is found at 70–258; sequence TLIAGIDEVG…VKSLVLGKKE (189 aa). Residues Asp-76, Glu-77, and Asp-168 each contribute to the a divalent metal cation site.

This sequence belongs to the RNase HII family. Mn(2+) is required as a cofactor. It depends on Mg(2+) as a cofactor.

Its subcellular location is the cytoplasm. The enzyme catalyses Endonucleolytic cleavage to 5'-phosphomonoester.. Endonuclease that specifically degrades the RNA of RNA-DNA hybrids. This is Ribonuclease HII from Streptococcus pneumoniae serotype 4 (strain ATCC BAA-334 / TIGR4).